The sequence spans 96 residues: Nucleoid-associated protein CT_335 (96 aa).

This sequence belongs to the YbaB/EbfC family. As to quaternary structure, homodimer.

It is found in the cytoplasm. The protein localises to the nucleoid. Functionally, binds to DNA and alters its conformation. May be involved in regulation of gene expression, nucleoid organization and DNA protection. This Chlamydia trachomatis serovar D (strain ATCC VR-885 / DSM 19411 / UW-3/Cx) protein is Nucleoid-associated protein CT_335.